The primary structure comprises 714 residues: Fatty acid oxidation complex subunit alpha (714 aa).

The enoyl-CoA hydratase stretch occupies residues M1–P190. Residues A306 to Q714 are 3-hydroxyacyl-CoA dehydrogenase.

The protein in the N-terminal section; belongs to the enoyl-CoA hydratase/isomerase family. This sequence in the central section; belongs to the 3-hydroxyacyl-CoA dehydrogenase family. As to quaternary structure, heterotetramer of two alpha chains (FadJ) and two beta chains (FadI).

It localises to the cytoplasm. It catalyses the reaction a (3S)-3-hydroxyacyl-CoA = a (2E)-enoyl-CoA + H2O. The catalysed reaction is a 4-saturated-(3S)-3-hydroxyacyl-CoA = a (3E)-enoyl-CoA + H2O. The enzyme catalyses a (3S)-3-hydroxyacyl-CoA + NAD(+) = a 3-oxoacyl-CoA + NADH + H(+). It carries out the reaction (3S)-3-hydroxybutanoyl-CoA = (3R)-3-hydroxybutanoyl-CoA. Its pathway is lipid metabolism; fatty acid beta-oxidation. Its function is as follows. Catalyzes the formation of a hydroxyacyl-CoA by addition of water on enoyl-CoA. Also exhibits 3-hydroxyacyl-CoA epimerase and 3-hydroxyacyl-CoA dehydrogenase activities. This chain is Fatty acid oxidation complex subunit alpha, found in Escherichia coli O81 (strain ED1a).